The chain runs to 218 residues: Ribonuclease T (218 aa).

The region spanning 24–198 (VIIDVETAGF…YDAERTAELF (175 aa)) is the Exonuclease domain. Mg(2+) is bound by residues aspartate 27, glutamate 29, histidine 185, and aspartate 190. Catalysis depends on histidine 185, which acts as the Proton donor/acceptor.

Belongs to the RNase T family. As to quaternary structure, homodimer. Requires Mg(2+) as cofactor.

Its function is as follows. Trims short 3' overhangs of a variety of RNA species, leaving a one or two nucleotide 3' overhang. Responsible for the end-turnover of tRNA: specifically removes the terminal AMP residue from uncharged tRNA (tRNA-C-C-A). Also appears to be involved in tRNA biosynthesis. The chain is Ribonuclease T from Histophilus somni (strain 129Pt) (Haemophilus somnus).